The chain runs to 465 residues: Mitochondrial F-box protein MFB1 (465 aa).

One can recognise an F-box domain in the interval 14–60; it reads ERSLTNLPLNLLFRILSHLDMNDLQNIGKTCTLLRMLANENIVYRNA. A disordered region spans residues 253-279; sequence FTKSRDPDYKEMTPTSTESSDSITRLR. The segment covering 254-263 has biased composition (basic and acidic residues); that stretch reads TKSRDPDYKE. A compositionally biased stretch (polar residues) spans 265–275; that stretch reads TPTSTESSDSI.

Its subcellular location is the mitochondrion. This is Mitochondrial F-box protein MFB1 (MFB1) from Saccharomyces cerevisiae (strain ATCC 204508 / S288c) (Baker's yeast).